Reading from the N-terminus, the 236-residue chain is Small ribosomal subunit protein uS3 (236 aa).

One can recognise a KH type-2 domain in the interval 39–107 (IREFLTEELK…DTSLNIVEVR (69 aa)). The interval 214 to 236 (ASERRAVEGDNQGSSSNRRRENA) is disordered.

It belongs to the universal ribosomal protein uS3 family. Part of the 30S ribosomal subunit. Forms a tight complex with proteins S10 and S14.

Binds the lower part of the 30S subunit head. Binds mRNA in the 70S ribosome, positioning it for translation. In Brucella abortus (strain S19), this protein is Small ribosomal subunit protein uS3.